The following is a 304-amino-acid chain: MTTLRIATRKSPLALWQSEHVATALRQHHPGLEVVLVPMSTRGDEVLDRSLAAIGGKGLFLKELELAMLRGEADCAVHSLKDVPMELDAPFVLPAILERGDPADALVSNLYATLQALPLGARVGTSSLRRQAQLRAARPDLELIDLRGNVNTRLAKLDNGGYDAIVLACAGLQRLGLEARITARLDAPEWLPAPAQGAVAVECRGDDARIHDLLAVLDAGRTRACVEAERAMNRALHGSCHVPVAAFARWEGEDLFLQGMVGSASDGRLIHAEAHGSPDATEDLGRLVADGLFEKGAAQLLAEL.

Cys240 is subject to S-(dipyrrolylmethanemethyl)cysteine.

It belongs to the HMBS family. Monomer. The cofactor is dipyrromethane.

The enzyme catalyses 4 porphobilinogen + H2O = hydroxymethylbilane + 4 NH4(+). It functions in the pathway porphyrin-containing compound metabolism; protoporphyrin-IX biosynthesis; coproporphyrinogen-III from 5-aminolevulinate: step 2/4. Functionally, tetrapolymerization of the monopyrrole PBG into the hydroxymethylbilane pre-uroporphyrinogen in several discrete steps. The protein is Porphobilinogen deaminase of Xanthomonas campestris pv. campestris (strain ATCC 33913 / DSM 3586 / NCPPB 528 / LMG 568 / P 25).